Here is an 84-residue protein sequence, read N- to C-terminus: Conotoxin Tx8.1 (84 aa).

An N-terminal signal peptide occupies residues 1–19 (LKMGAMFVLLLLFTLASSH). Residues 20-44 (REGDIQARKTHLKSDFYRTLPRFAR) constitute a propeptide that is removed on maturation.

This sequence belongs to the conotoxin S superfamily. Post-translationally, contains 5 disulfide bonds. Expressed by the venom duct.

It localises to the secreted. The protein is Conotoxin Tx8.1 of Conus textile (Cloth-of-gold cone).